The primary structure comprises 235 residues: Segregation and condensation protein A (235 aa).

It belongs to the ScpA family. As to quaternary structure, component of a cohesin-like complex composed of ScpA, ScpB and the Smc homodimer, in which ScpA and ScpB bind to the head domain of Smc. The presence of the three proteins is required for the association of the complex with DNA.

Its subcellular location is the cytoplasm. Functionally, participates in chromosomal partition during cell division. May act via the formation of a condensin-like complex containing Smc and ScpB that pull DNA away from mid-cell into both cell halves. This Streptococcus agalactiae serotype III (strain NEM316) protein is Segregation and condensation protein A.